We begin with the raw amino-acid sequence, 331 residues long: Peroxidase 60 (331 aa).

The signal sequence occupies residues 1–26 (MAVKISTIEVLILSLALLSFGHGCYG). 4 disulfide bridges follow: cysteine 37–cysteine 113, cysteine 70–cysteine 75, cysteine 119–cysteine 321, and cysteine 198–cysteine 230. Histidine 68 acts as the Proton acceptor in catalysis. Positions 69, 74, 76, and 78 each coordinate Ca(2+). Proline 161 lines the substrate pocket. A heme b-binding site is contributed by histidine 191. Threonine 192 serves as a coordination point for Ca(2+). Asparagine 245 is a glycosylation site (N-linked (GlcNAc...) asparagine). Residues serine 248 and aspartate 253 each coordinate Ca(2+).

It belongs to the peroxidase family. Classical plant (class III) peroxidase subfamily. Requires heme b as cofactor. It depends on Ca(2+) as a cofactor. Expressed in roots, slightly in leaves.

It is found in the secreted. The catalysed reaction is 2 a phenolic donor + H2O2 = 2 a phenolic radical donor + 2 H2O. Functionally, removal of H(2)O(2), oxidation of toxic reductants, biosynthesis and degradation of lignin, suberization, auxin catabolism, response to environmental stresses such as wounding, pathogen attack and oxidative stress. These functions might be dependent on each isozyme/isoform in each plant tissue. The polypeptide is Peroxidase 60 (PER60) (Arabidopsis thaliana (Mouse-ear cress)).